Consider the following 475-residue polypeptide: Ribulose bisphosphate carboxylase large chain (475 aa).

Residues N123 and T173 each contribute to the substrate site. The active-site Proton acceptor is K175. Position 177 (K177) interacts with substrate. Positions 201, 203, and 204 each coordinate Mg(2+). An N6-carboxylysine modification is found at K201. Catalysis depends on H294, which acts as the Proton acceptor. 3 residues coordinate substrate: R295, H327, and S379.

This sequence belongs to the RuBisCO large chain family. Type I subfamily. In terms of assembly, heterohexadecamer of 8 large chains and 8 small chains. Mg(2+) is required as a cofactor.

It is found in the plastid. The protein resides in the cyanelle. It carries out the reaction 2 (2R)-3-phosphoglycerate + 2 H(+) = D-ribulose 1,5-bisphosphate + CO2 + H2O. It catalyses the reaction D-ribulose 1,5-bisphosphate + O2 = 2-phosphoglycolate + (2R)-3-phosphoglycerate + 2 H(+). Its function is as follows. RuBisCO catalyzes two reactions: the carboxylation of D-ribulose 1,5-bisphosphate, the primary event in carbon dioxide fixation, as well as the oxidative fragmentation of the pentose substrate in the photorespiration process. Both reactions occur simultaneously and in competition at the same active site. The protein is Ribulose bisphosphate carboxylase large chain of Cyanophora paradoxa.